Consider the following 87-residue polypeptide: Co-chaperonin GroES (87 aa).

The protein belongs to the GroES chaperonin family. In terms of assembly, heptamer of 7 subunits arranged in a ring. Interacts with the chaperonin GroEL.

It localises to the cytoplasm. Functionally, together with the chaperonin GroEL, plays an essential role in assisting protein folding. The GroEL-GroES system forms a nano-cage that allows encapsulation of the non-native substrate proteins and provides a physical environment optimized to promote and accelerate protein folding. GroES binds to the apical surface of the GroEL ring, thereby capping the opening of the GroEL channel. The chain is Co-chaperonin GroES from Campylobacter hominis (strain ATCC BAA-381 / DSM 21671 / CCUG 45161 / LMG 19568 / NCTC 13146 / CH001A).